A 119-amino-acid polypeptide reads, in one-letter code: Large ribosomal subunit protein uL18 (119 aa).

This sequence belongs to the universal ribosomal protein uL18 family. Part of the 50S ribosomal subunit; part of the 5S rRNA/L5/L18/L25 subcomplex. Contacts the 5S and 23S rRNAs.

This is one of the proteins that bind and probably mediate the attachment of the 5S RNA into the large ribosomal subunit, where it forms part of the central protuberance. The polypeptide is Large ribosomal subunit protein uL18 (Clostridium botulinum (strain 657 / Type Ba4)).